We begin with the raw amino-acid sequence, 122 residues long: Large ribosomal subunit protein uL14 (122 aa).

The protein belongs to the universal ribosomal protein uL14 family. Part of the 50S ribosomal subunit. Forms a cluster with proteins L3 and L19. In the 70S ribosome, L14 and L19 interact and together make contacts with the 16S rRNA in bridges B5 and B8.

Binds to 23S rRNA. Forms part of two intersubunit bridges in the 70S ribosome. This is Large ribosomal subunit protein uL14 from Stutzerimonas stutzeri (strain A1501) (Pseudomonas stutzeri).